We begin with the raw amino-acid sequence, 324 residues long: Aldo-keto reductase family 1 member C15 (324 aa).

NADP(+) contacts are provided by residues 24–26 (TFA) and Asp51. Tyr56 functions as the Proton donor in the catalytic mechanism. His118 contributes to the substrate binding site. NADP(+)-binding positions include 167–168 (SN), Gln191, 217–225 (YSALGSHRD), and 269–281 (LAKS…IKEN).

It belongs to the aldo/keto reductase family. Monomer. As to expression, expressed in lung, specifically in bronchiolar club cells, type II alveolar cells and epithelial cells of the duct of the bronchial gland (at protein level). Expressed in gastric parietal cells and in epithelial cells of the large intestine and colon (at protein level). Expressed in brown adipocytes (at protein level). Expressed in vascular endothelial cells (at protein level).

The protein resides in the cytoplasm. The enzyme catalyses (2E,6E)-farnesol + NADP(+) = (2E,6E)-farnesal + NADPH + H(+). Its activity is regulated as follows. The dehydrogenase activity is inhibited by 3',3'',5',5''-tetraiodophenolphthalein, phenolphthalein, genistein, quercetin, zearalenone and diethylstilbestrol. Catalyzes the NADPH-dependent reduction of a variety of substrates including aromatic and aliphatic aldehydes, quinones, ketones, dicarbonyl compounds and 17-ketosteroids. Catalyzes the NADP(+)-dependent oxidation of aromatic, alicyclic and aliphatic alcohols, and 17beta-hydroxysteroids. To a lesser extent, can also catalyze the reduction of some aldoses and ketoses and the oxidation of some sugar alcohols. In the stomach, lung and colon tissues, mediates the reduction of farnesal and geranylgeranial into farnesol and geranylgeraniol respectively. By reducing 4-hydroxy-2-nonenal (HNE), produced during lipid peroxidation, into 1,4-dihydro-2-nonene (DHN), protects vascular endothelial cells from damage elicited by oxidized lipoproteins. The chain is Aldo-keto reductase family 1 member C15 from Rattus norvegicus (Rat).